Here is a 600-residue protein sequence, read N- to C-terminus: ATP-dependent ubiquitin transferase-like protein Cap2 (600 aa).

The E2-like domain stretch occupies residues 1 to 158 (MSTVVQQVPA…QEKLATTGDA (158 aa)). The active-site For E2-like domain is Cys109. Residues 159-373 (VELPAFPDQS…DQLRTRGEAA (215 aa)) form a linker domain region. Residues 375 to 600 (DIRSKKVLII…GTVEKEPHEY (226 aa)) form an adenylation plus E1-like domain region. Cys548 serves as the catalytic For E1-like domain.

The protein in the C-terminal section; belongs to the HesA/MoeB/ThiF family. As to quaternary structure, crystallizes as a Cap2 homodimer bound on each side by a CdnD monomer.

In terms of biological role, CD-NTase priming component of a CBASS antiviral system. CBASS (cyclic oligonucleotide-based antiphage signaling system) provides immunity against bacteriophages. The CD-NTase protein (CdnD) synthesizes cyclic nucleotides in response to infection; these serve as specific second messenger signals. The signals activate a diverse range of effectors, leading to bacterial cell death and thus abortive phage infection. A type II-C(AAG) CBASS system. Functionally, primes CdnD; acts as a protein transferase, conjugating CdnD, the CD-NTase, to unidentified target(s) in the cell via an E1-E2 ubiquitin transferase-like mechanism. Upon phage infection CdnD activates and makes cyclic nucleotides. During the conjugation reaction CdnD is transiently attached to AMP. Protein conjugation requires ATP. Its function is as follows. Protects E.coli against phage T2 infection. When the cdnD-cap2-cap3-cap4 operon is introduced in E.coli there is a more than 10(3) decrease in the efficiency of T2 plaque formation. The operon does not protect against phage T5 and only about 10-fold against T7. This Enterobacter hormaechei subsp. hoffmannii (strain UCI 50) protein is ATP-dependent ubiquitin transferase-like protein Cap2.